The chain runs to 153 residues: 6,7-dimethyl-8-ribityllumazine synthase (153 aa).

5-amino-6-(D-ribitylamino)uracil is bound by residues Phe22, Ala56 to Glu58, and Thr80 to Ile82. Ala85–Thr86 contacts (2S)-2-hydroxy-3-oxobutyl phosphate. His88 functions as the Proton donor in the catalytic mechanism. Residue Phe113 participates in 5-amino-6-(D-ribitylamino)uracil binding. (2S)-2-hydroxy-3-oxobutyl phosphate is bound at residue Arg127.

Belongs to the DMRL synthase family.

It catalyses the reaction (2S)-2-hydroxy-3-oxobutyl phosphate + 5-amino-6-(D-ribitylamino)uracil = 6,7-dimethyl-8-(1-D-ribityl)lumazine + phosphate + 2 H2O + H(+). It participates in cofactor biosynthesis; riboflavin biosynthesis; riboflavin from 2-hydroxy-3-oxobutyl phosphate and 5-amino-6-(D-ribitylamino)uracil: step 1/2. Functionally, catalyzes the formation of 6,7-dimethyl-8-ribityllumazine by condensation of 5-amino-6-(D-ribitylamino)uracil with 3,4-dihydroxy-2-butanone 4-phosphate. This is the penultimate step in the biosynthesis of riboflavin. This Clostridium perfringens (strain ATCC 13124 / DSM 756 / JCM 1290 / NCIMB 6125 / NCTC 8237 / Type A) protein is 6,7-dimethyl-8-ribityllumazine synthase.